Consider the following 221-residue polypeptide: MAYRDQSLGELAIAIPRATKLFRELNLDFCCGGKQTLSRAAGKKDLNIDELEAQLEKLAAQPSDARDWREAPLADIIAYIIPRFHDRHREQLPELILMAKKVERVHHDKADCPHGLANQLTAIYNELSQHMMKEERILFPMIGQGMGANAAAPISVMEHEHDDAGRDVEVVKELTNGVVPPEGACNTWRALYSGINEFITDLMEHIHLENNLLFPRALRGE.

The protein belongs to the RIC family. YtfE subfamily. As to quaternary structure, homodimer.

It localises to the cytoplasm. Di-iron-containing protein involved in the repair of iron-sulfur clusters damaged by oxidative and nitrosative stress conditions. The polypeptide is Iron-sulfur cluster repair protein YtfE (Pectobacterium atrosepticum (strain SCRI 1043 / ATCC BAA-672) (Erwinia carotovora subsp. atroseptica)).